Here is a 545-residue protein sequence, read N- to C-terminus: Mesoderm induction early response protein 2 (545 aa).

Position 11 is a phosphoserine (Ser11). The segment at 100–189 (DPISDRESEG…SSDTEEDSLP (90 aa)) is disordered. Over residues 140-153 (QSSADDLTPSVTSH) the composition is skewed to polar residues. Residues 195–292 (KEIMVGPQFQ…EALRRLRFNV (98 aa)) enclose the ELM2 domain. An SANT domain is found at 297–349 (DGLCAWSEEECRNFEHGFRVHGKNFHLIQANKVRTRSVGECVEYYYLWKKSER). The segment at 364–464 (YVPSGTTDAD…YQPAVTAPEP (101 aa)) is disordered.

As to quaternary structure, part of a complex containing at least CDYL, MIER1, MIER2, HDAC1 and HDAC2.

Its subcellular location is the nucleus. Transcriptional repressor. This is Mesoderm induction early response protein 2 (MIER2) from Homo sapiens (Human).